The sequence spans 156 residues: ATP synthase subunit b 1 (156 aa).

The chain crosses the membrane as a helical span at residues 7-27 (LFLQAIVFAILVWFTMKFVWP).

It belongs to the ATPase B chain family. As to quaternary structure, F-type ATPases have 2 components, F(1) - the catalytic core - and F(0) - the membrane proton channel. F(1) has five subunits: alpha(3), beta(3), gamma(1), delta(1), epsilon(1). F(0) has three main subunits: a(1), b(2) and c(10-14). The alpha and beta chains form an alternating ring which encloses part of the gamma chain. F(1) is attached to F(0) by a central stalk formed by the gamma and epsilon chains, while a peripheral stalk is formed by the delta and b chains.

It localises to the cell inner membrane. In terms of biological role, f(1)F(0) ATP synthase produces ATP from ADP in the presence of a proton or sodium gradient. F-type ATPases consist of two structural domains, F(1) containing the extramembraneous catalytic core and F(0) containing the membrane proton channel, linked together by a central stalk and a peripheral stalk. During catalysis, ATP synthesis in the catalytic domain of F(1) is coupled via a rotary mechanism of the central stalk subunits to proton translocation. Its function is as follows. Component of the F(0) channel, it forms part of the peripheral stalk, linking F(1) to F(0). This chain is ATP synthase subunit b 1, found in Albidiferax ferrireducens (strain ATCC BAA-621 / DSM 15236 / T118) (Rhodoferax ferrireducens).